The sequence spans 468 residues: Tyramine receptor tyra-2 (468 aa).

At 1 to 23 (MMSSYVMSPVDETYTLFQILKGS) the chain is on the extracellular side. A helical transmembrane segment spans residues 24–43 (ALFLLVLWTIFANSLVFIVL). The Cytoplasmic portion of the chain corresponds to 44-54 (YKNPRLQTVPN). A helical transmembrane segment spans residues 55-77 (LLVGNLAFSDLALGLIVLPLSSV). Topologically, residues 78 to 91 (YAIAGEWVFPDALC) are extracellular. Residues C91 and C177 are joined by a disulfide bond. Residues 92–114 (EVFVSADILCSTASIWNLSIVGL) form a helical membrane-spanning segment. Residues 115 to 134 (DRYWAITSPVAYMSKRNKRT) are Cytoplasmic-facing. The chain crosses the membrane as a helical span at residues 135 to 157 (AGIMILSVWISSALISLAPLLGW). Residues 158–186 (KQTAQTPNLIYEKNNTVRQCTFLDLPSYT) lie on the Extracellular side of the membrane. N171 is a glycosylation site (N-linked (GlcNAc...) asparagine). The helical transmembrane segment at 187–209 (VYSATGSFFIPTLLMFFVYFKIY) threads the bilayer. The Cytoplasmic portion of the chain corresponds to 210-387 (QAFAKHRARQ…SAAKERRGVK (178 aa)). Residues 252–306 (DEFAKEEEEEEDSESSGQVENGLGNGNDAIIEEDECEDEDSDEKRDDHTSMTTVT) form a disordered region. Acidic residues-rich tracts occupy residues 255-265 (AKEEEEEEDSE) and 281-292 (IIEEDECEDEDS). A helical membrane pass occupies residues 388–410 (VLGIILGCFTVCWAPFFTMYVLV). At 411 to 424 (QFCKDCSPNAHIEM) the chain is on the extracellular side. A helical membrane pass occupies residues 425–444 (FITWLGYSNSAMNPIIYTVF). Topologically, residues 445–468 (NRDYQIALKRLFTSEKKPSSTSRV) are cytoplasmic.

This sequence belongs to the G-protein coupled receptor 1 family. In terms of tissue distribution, expressed in the pharyngeal neurons, MCL/R and NSML/R and the AS group of amphidial sensory neurons, ASEL/R, AGSL/R, ASHL/R and ASIL/R.

The protein localises to the cell membrane. Functionally, G-protein coupled receptor for tyramine, a known neurotransmitter and neuromodulator and direct precursor of octopamine. Expression in amphidial sensory neurons suggests a role in chemosensation. The sequence is that of Tyramine receptor tyra-2 (tyra-2) from Caenorhabditis elegans.